The chain runs to 655 residues: Ankyrin repeat and SAM domain-containing protein 3 (655 aa).

An interaction with NEK7 region spans residues 1–421; the sequence is MSELSDEASE…PGSEPQTEKS (421 aa). Phosphoserine is present on residues Ser2 and Ser5. 6 ANK repeats span residues 34 to 64, 68 to 97, 101 to 130, 134 to 163, 168 to 197, and 201 to 220; these read DVPLDLHTAASIGQHEVVKECVQRGELDLNK, GGWTALMYASYIGHDTIVHLLLEAGVSVNV, EGQTPLMLASSCGNESIAYFLLQQGAELEM, HGWTALFHCTSAGHQQMVKFLLESGANANV, YGYTPLMEAAASGHEIIVQYFLNHGVKVDT, and SGATACMLARQFGHMKIVAL. Asn96 bears the 3-hydroxyasparagine mark. Ser201, Ser225, Ser243, Ser244, and Ser245 each carry phosphoserine. The disordered stretch occupies residues 314–426; the sequence is YRDVTSPINE…QTEKSPYSGP (113 aa). Thr318 is subject to Phosphothreonine. 4 positions are modified to phosphoserine: Ser319, Ser366, Ser369, and Ser373. Residues 378-395 show a composition bias toward basic residues; the sequence is KSSVRKQTRSYLKNKSRH. The 64-residue stretch at 424–487 folds into the SAM domain; that stretch reads SGPQDLATLL…TSAIARWHSS (64 aa). The stretch at 500-575 forms a coiled coil; sequence ADRLETEMQE…AALVLDQLRA (76 aa). The residue at position 540 (Ser540) is a Phosphoserine.

Homooligomer. Interacts (via SAM domain) with ANKS6 (via SAM domain). Interacts with BICC1. Interacts with NPHP1. Interacts with NEK8. Interacts with HIF1AN. Interacts with NEK7; this interaction alters the subcellular distribution of NEK7 by preventing its nuclear translocation. Hydroxylated at Asn-96, most probably by HIF1AN. In terms of processing, phosphorylations at Ser-5, Ser-225, Thr-318, Ser-319, Ser-366 and Ser-369 occur in a NEK7-dependent manner. Post-translationally, polyubiquitinated. Kidney (at protein level).

Its subcellular location is the cell projection. The protein localises to the cilium. It localises to the cytoplasm. In terms of biological role, may be involved in vasopressin signaling in the kidney. In Mus musculus (Mouse), this protein is Ankyrin repeat and SAM domain-containing protein 3 (Anks3).